The sequence spans 137 residues: Actin-depolymerizing factor 2 (137 aa).

The ADF-H domain occupies 5–137 (ASGMAVHDDC…GLDVFKSRTN (133 aa)). A Phosphoserine modification is found at Ser6.

This sequence belongs to the actin-binding proteins ADF family. In terms of assembly, interacts with AIP1-1.

Its subcellular location is the cytoplasm. It is found in the cytoskeleton. Functionally, actin-depolymerizing protein. Severs actin filaments (F-actin) and binds to actin monomers. Required for normal cell growth, plant development, cell organ expansion and flowering. Essential for root-knot nematode infection. This Arabidopsis thaliana (Mouse-ear cress) protein is Actin-depolymerizing factor 2 (ADF2).